Consider the following 116-residue polypeptide: S-adenosylmethionine decarboxylase proenzyme (116 aa).

Catalysis depends on Ser63, which acts as the Schiff-base intermediate with substrate; via pyruvic acid. At Ser63 the chain carries Pyruvic acid (Ser); by autocatalysis. The active-site Proton acceptor; for processing activity is the His68. Cys83 functions as the Proton donor; for catalytic activity in the catalytic mechanism.

This sequence belongs to the prokaryotic AdoMetDC family. Type 1 subfamily. In terms of assembly, heterotetramer of two alpha and two beta chains arranged as a dimer of alpha/beta heterodimers. The cofactor is pyruvate. Post-translationally, is synthesized initially as an inactive proenzyme. Formation of the active enzyme involves a self-maturation process in which the active site pyruvoyl group is generated from an internal serine residue via an autocatalytic post-translational modification. Two non-identical subunits are generated from the proenzyme in this reaction, and the pyruvate is formed at the N-terminus of the alpha chain, which is derived from the carboxyl end of the proenzyme. The post-translation cleavage follows an unusual pathway, termed non-hydrolytic serinolysis, in which the side chain hydroxyl group of the serine supplies its oxygen atom to form the C-terminus of the beta chain, while the remainder of the serine residue undergoes an oxidative deamination to produce ammonia and the pyruvoyl group blocking the N-terminus of the alpha chain.

The enzyme catalyses S-adenosyl-L-methionine + H(+) = S-adenosyl 3-(methylsulfanyl)propylamine + CO2. It functions in the pathway amine and polyamine biosynthesis; S-adenosylmethioninamine biosynthesis; S-adenosylmethioninamine from S-adenosyl-L-methionine: step 1/1. Its function is as follows. Catalyzes the decarboxylation of S-adenosylmethionine to S-adenosylmethioninamine (dcAdoMet), the propylamine donor required for the synthesis of the polyamines spermine and spermidine from the diamine putrescine. The protein is S-adenosylmethionine decarboxylase proenzyme of Clostridium botulinum (strain ATCC 19397 / Type A).